The chain runs to 629 residues: tRNA uridine 5-carboxymethylaminomethyl modification enzyme MnmG (629 aa).

13 to 18 serves as a coordination point for FAD; it reads GGGHAG. Residue 273 to 287 participates in NAD(+) binding; that stretch reads GPRYCPSIEDKVNRF.

It belongs to the MnmG family. As to quaternary structure, homodimer. Heterotetramer of two MnmE and two MnmG subunits. Requires FAD as cofactor.

It is found in the cytoplasm. Functionally, NAD-binding protein involved in the addition of a carboxymethylaminomethyl (cmnm) group at the wobble position (U34) of certain tRNAs, forming tRNA-cmnm(5)s(2)U34. This is tRNA uridine 5-carboxymethylaminomethyl modification enzyme MnmG from Hahella chejuensis (strain KCTC 2396).